Reading from the N-terminus, the 217-residue chain is Uracil-DNA glycosylase (217 aa).

Residue D62 is the Proton acceptor of the active site.

It belongs to the uracil-DNA glycosylase (UDG) superfamily. UNG family.

It is found in the cytoplasm. The catalysed reaction is Hydrolyzes single-stranded DNA or mismatched double-stranded DNA and polynucleotides, releasing free uracil.. Its function is as follows. Excises uracil residues from the DNA which can arise as a result of misincorporation of dUMP residues by DNA polymerase or due to deamination of cytosine. This is Uracil-DNA glycosylase from Streptococcus equi subsp. equi (strain 4047).